The chain runs to 709 residues: ATP-dependent zinc metalloprotease YME1 homolog (709 aa).

The disordered stretch occupies residues 152-182; the sequence is FTSDTSSTVSSTPSLNHSLQNSMPPSTPTPP. Residues 153 to 165 show a composition bias toward low complexity; it reads TSDTSSTVSSTPS. Residues 217-239 form a helical membrane-spanning segment; that stretch reads IFKFIAGLSVASYFVLLGMSIFA. 307-314 provides a ligand contact to ATP; the sequence is GPPGTGKT. Zn(2+) is bound at residue His-530. Glu-531 is an active-site residue. The Zn(2+) site is built by His-534 and Asp-608.

This sequence in the N-terminal section; belongs to the AAA ATPase family. The protein in the C-terminal section; belongs to the peptidase M41 family. It depends on Zn(2+) as a cofactor.

The protein localises to the mitochondrion membrane. Its function is as follows. Putative ATP-dependent protease. The protein is ATP-dependent zinc metalloprotease YME1 homolog of Schizosaccharomyces pombe (strain 972 / ATCC 24843) (Fission yeast).